The primary structure comprises 471 residues: MSKKYDAGVKEYRDTYWTPDYVPLDTDLLACFKCTGQEGVPKEEVAAAVAAESSTGTWSTVWSELLTDLDFYKGRCYRIEDVPGDKESFYAFIAYPLDLFEEGSITNVLTSLVGNVFGFKALRHLRLEDIRFPMAFIKSCYGPPNGIQVERDRMNKYGRPLLGCTIKPKLGLSGKNYGRVVYECLRGGLDFTKDDENINSQPFQRWQNRFEFVAEAIKLSEQETGERKGHYLNVTANTPEEMYERAEFAKELGMPIIMHDFITGGFTANTGLSKWCRKNGMLLHIHRAMHAVIDRHPKHGIHFRVLAKCLRLSGGDQLHTGTVVGKLEGDRQTTLGYIDQLRESFVPEDRSRGNFFDQDWGSMPGVFAVASGGIHVWHMPALVTIFGDDSVLQFGGGTHGHPWGSAAGAAANRVALEACVKARNAGRHLEKESRDILMEAGKHSPELAIALETWKEIKFEFDTVDKLDVQN.

The substrate site is built by Asn115 and Thr165. Lys167 serves as the catalytic Proton acceptor. Lys169 is a binding site for substrate. 3 residues coordinate Mg(2+): Lys193, Asp195, and Glu196. At Lys193 the chain carries N6-carboxylysine. The active-site Proton acceptor is the His286. Positions 287, 319, and 371 each coordinate substrate.

Belongs to the RuBisCO large chain family. Type I subfamily. In terms of assembly, heterohexadecamer of 8 large chains and 8 small chains. Mg(2+) is required as a cofactor.

Its subcellular location is the carboxysome. The enzyme catalyses 2 (2R)-3-phosphoglycerate + 2 H(+) = D-ribulose 1,5-bisphosphate + CO2 + H2O. It carries out the reaction D-ribulose 1,5-bisphosphate + O2 = 2-phosphoglycolate + (2R)-3-phosphoglycerate + 2 H(+). Its function is as follows. RuBisCO catalyzes two reactions: the carboxylation of D-ribulose 1,5-bisphosphate, the primary event in carbon dioxide fixation, as well as the oxidative fragmentation of the pentose substrate in the photorespiration process. Both reactions occur simultaneously and in competition at the same active site. This is Ribulose bisphosphate carboxylase large chain from Synechococcus sp. (strain WH7803).